The following is a 109-amino-acid chain: T cell receptor alpha variable 25 (109 aa).

Positions 1–19 are cleaved as a signal peptide; sequence MLLITSMLVLWMQLSQVNG. One can recognise an Ig-like domain in the interval 20–109; the sequence is QQVMQIPQYQ…TDVGTYFCAG (90 aa). Cys41 and Cys107 are joined by a disulfide. 2 N-linked (GlcNAc...) asparagine glycosylation sites follow: Asn42 and Asn89.

Alpha-beta TR is a heterodimer composed of an alpha and beta chain; disulfide-linked. The alpha-beta TR is associated with the transmembrane signaling CD3 coreceptor proteins to form the TR-CD3 (TcR or TCR). The assembly of alpha-beta TR heterodimers with CD3 occurs in the endoplasmic reticulum where a single alpha-beta TR heterodimer associates with one CD3D-CD3E heterodimer, one CD3G-CD3E heterodimer and one CD247 homodimer forming a stable octameric structure. CD3D-CD3E and CD3G-CD3E heterodimers preferentially associate with TR alpha and TR beta chains, respectively. The association of the CD247 homodimer is the last step of TcR assembly in the endoplasmic reticulum and is required for transport to the cell surface.

The protein resides in the cell membrane. In terms of biological role, v region of the variable domain of T cell receptor (TR) alpha chain that participates in the antigen recognition. Alpha-beta T cell receptors are antigen specific receptors which are essential to the immune response and are present on the cell surface of T lymphocytes. Recognize peptide-major histocompatibility (MH) (pMH) complexes that are displayed by antigen presenting cells (APC), a prerequisite for efficient T cell adaptive immunity against pathogens. Binding of alpha-beta TR to pMH complex initiates TR-CD3 clustering on the cell surface and intracellular activation of LCK that phosphorylates the ITAM motifs of CD3G, CD3D, CD3E and CD247 enabling the recruitment of ZAP70. In turn ZAP70 phosphorylates LAT, which recruits numerous signaling molecules to form the LAT signalosome. The LAT signalosome propagates signal branching to three major signaling pathways, the calcium, the mitogen-activated protein kinase (MAPK) kinase and the nuclear factor NF-kappa-B (NF-kB) pathways, leading to the mobilization of transcription factors that are critical for gene expression and essential for T cell growth and differentiation. The T cell repertoire is generated in the thymus, by V-(D)-J rearrangement. This repertoire is then shaped by intrathymic selection events to generate a peripheral T cell pool of self-MH restricted, non-autoaggressive T cells. Post-thymic interaction of alpha-beta TR with the pMH complexes shapes TR structural and functional avidity. The polypeptide is T cell receptor alpha variable 25 (Homo sapiens (Human)).